The sequence spans 304 residues: Glutaminase (304 aa).

Residues S63, N114, E158, N165, Y189, Y240, and V258 each coordinate substrate.

It belongs to the glutaminase family. As to quaternary structure, homotetramer.

It catalyses the reaction L-glutamine + H2O = L-glutamate + NH4(+). The sequence is that of Glutaminase from Shewanella baltica (strain OS223).